The chain runs to 394 residues: Protein maelstrom (394 aa).

The HMG box DNA-binding region spans A2–N69. The disordered stretch occupies residues T44–A93. Residues Q73–A93 are compositionally biased toward basic and acidic residues.

The protein belongs to the maelstrom family.

The protein resides in the cytoplasm. It localises to the nucleus. In terms of biological role, involved both in the piRNA and miRNA metabolic processes. As a component of the meiotic nuage, plays a central role during oogenesis by repressing transposable elements and preventing their mobilization, which is essential for the germline integrity. Repression of transposable elements is mediated via the piRNA metabolic process, which mediates the repression of transposable elements during meiosis by forming complexes composed of piRNAs and Piwi proteins and governs the repression of transposons. As a nuclear component, it is required for proper differentiation in the germline stem cell (GSC) lineage by repressing microRNA-7 (miR-7), thereby acting as an indirect regulator of bag-of-marbles (Bam). Acts by binding to the promoter of miR-7 gene and repressing its expression; miR-7 repression alleviates the Bam repression by miR-7, thereby allowing differentiation in the germline stem cell (GSC) lineage. The polypeptide is Protein maelstrom (mael) (Drosophila sechellia (Fruit fly)).